The sequence spans 151 residues: Small ribosomal subunit protein uS13 (151 aa).

This sequence belongs to the universal ribosomal protein uS13 family. As to quaternary structure, part of the 30S ribosomal subunit. Forms a loose heterodimer with protein S19. Forms two bridges to the 50S subunit in the 70S ribosome.

Located at the top of the head of the 30S subunit, it contacts several helices of the 16S rRNA. In the 70S ribosome it contacts the 23S rRNA (bridge B1a) and protein L5 of the 50S subunit (bridge B1b), connecting the 2 subunits; these bridges are implicated in subunit movement. The chain is Small ribosomal subunit protein uS13 from Methanospirillum hungatei JF-1 (strain ATCC 27890 / DSM 864 / NBRC 100397 / JF-1).